We begin with the raw amino-acid sequence, 435 residues long: Amidase 1 (435 aa).

Active-site charge relay system residues include K38 and S115. The active-site Acyl-ester intermediate is the S139.

This sequence belongs to the amidase family.

It is found in the cytoplasm. The protein localises to the nucleus. Its subcellular location is the nucleoplasm. It carries out the reaction a monocarboxylic acid amide + H2O = a monocarboxylate + NH4(+). Amidase involved in auxin biosynthesis. Converts indole-3-acetamide (IAM) to indole-3-acetate, and phenyl-2-acetamide (PAM) to phenyl-2-acetate. Substrate preference is PAM &gt; IAM. The polypeptide is Amidase 1 (Oryza sativa subsp. japonica (Rice)).